A 286-amino-acid chain; its full sequence is NAD kinase (286 aa).

Aspartate 74 serves as the catalytic Proton acceptor. Residues 74–75 (DG), 148–149 (ND), aspartate 178, alanine 186, 189–194 (TAYNLS), and glutamine 244 each bind NAD(+).

Belongs to the NAD kinase family. The cofactor is a divalent metal cation.

The protein resides in the cytoplasm. It carries out the reaction NAD(+) + ATP = ADP + NADP(+) + H(+). In terms of biological role, involved in the regulation of the intracellular balance of NAD and NADP, and is a key enzyme in the biosynthesis of NADP. Catalyzes specifically the phosphorylation on 2'-hydroxyl of the adenosine moiety of NAD to yield NADP. This is NAD kinase from Campylobacter jejuni subsp. jejuni serotype O:2 (strain ATCC 700819 / NCTC 11168).